We begin with the raw amino-acid sequence, 181 residues long: Protein GrpE (181 aa).

Over residues 1 to 12 the composition is skewed to polar residues; sequence MENTQENPTTPS. The segment at 1–33 is disordered; the sequence is MENTQENPTTPSAEDIGSEKQAAQGAAPAAEAA. A compositionally biased stretch (low complexity) spans 21-33; the sequence is QAAQGAAPAAEAA.

Belongs to the GrpE family. In terms of assembly, homodimer.

The protein localises to the cytoplasm. Its function is as follows. Participates actively in the response to hyperosmotic and heat shock by preventing the aggregation of stress-denatured proteins, in association with DnaK and GrpE. It is the nucleotide exchange factor for DnaK and may function as a thermosensor. Unfolded proteins bind initially to DnaJ; upon interaction with the DnaJ-bound protein, DnaK hydrolyzes its bound ATP, resulting in the formation of a stable complex. GrpE releases ADP from DnaK; ATP binding to DnaK triggers the release of the substrate protein, thus completing the reaction cycle. Several rounds of ATP-dependent interactions between DnaJ, DnaK and GrpE are required for fully efficient folding. This chain is Protein GrpE, found in Burkholderia cenocepacia (strain HI2424).